The following is a 339-amino-acid chain: Prepilin peptidase EppA (339 aa).

10 helical membrane passes run 3–23, 27–47, 48–68, 75–95, 99–119, 125–145, 146–166, 180–200, 204–224, and 319–339; these read LLNV…ITDI, IIPH…GYYY, FGFN…ILSI, VKLF…VFYI, ILYL…YKIL, DIIP…YFIN, IYEI…SIFV, LGYL…TYFI, VLLT…VIYA, and FVPF…LAII.

The protein belongs to the peptidase A24 family.

Its subcellular location is the cell membrane. Peptidase that processes the N-terminus of prepilins. This is Prepilin peptidase EppA from Methanocaldococcus jannaschii (strain ATCC 43067 / DSM 2661 / JAL-1 / JCM 10045 / NBRC 100440) (Methanococcus jannaschii).